Consider the following 143-residue polypeptide: uncharacterized protein (143 aa).

The protein to E.coli YifN.

This is an uncharacterized protein from Haemophilus influenzae (strain ATCC 51907 / DSM 11121 / KW20 / Rd).